A 755-amino-acid chain; its full sequence is MSNSLQSVILKTAEEKSGSRCISGCMYQVVPTIGSDGKKLLQLLPISKSSGNLIPVVQSPVMSHGLKANTEKPVQVTFQTQISSSSTSASVQLPVFQPANTTKCFFTGAIDTTGKDRVTSVRTGNFTPPVSNIQNHGVKIHKLTRQTFTIPPSTQNDSSHFIFNTPSLLPNVNSSILPSGNHLKIPAHAEVKSVLASSLPPLVQQKILGTATTSTSGTVEASQIPTVVYVHPVNSVKFVVTKKTQTIYPKPVTFNTLQIPPNVATETQLKGGQHPQAAPVNSIFQEYLQPGIPCIIPVKSSNNVATKVLNTFVGRKNLGDNTIDTPLLNTNSSGRTHSVSEPIKDNALIMFNGKVWLNEKGTCGLPSKIDQQNSVSSDIPLKDSSQLVSSSIVTEISREILNSVLVKSKSFQLKTKSLSNSQLASMANLRAEKNEKVERPSFSVTNPHTMNQSTHCLKQSKTVFINPVFPDGFRTGQNAPRKGNLVQNIEKICSSVDAATVTSQQCVFRDQESQTQYEMASIVKKEIQEKGNNKKYSQGSHTNIKASCLKNDAEFKKLFGLTKDLRVCLTRIPDHLSSGKSFNSFNSLMKSSSYKDANIVVKKEEKKQSFSKKRKAETMKMGNTKKIKIENADDTVMSIMNGTDVASSQPLSSILPTSDISQHNIVTSHSTTREDKRTEAEHCSHEKQEKGTLSSSTSFEQSTFLNKNFMEDIFPVTPPELEETIRDEKIRRLKQILREKEAALEELRKKMYQKQ.

Residue Lys-270 forms a Glycyl lysine isopeptide (Lys-Gly) (interchain with G-Cter in SUMO2) linkage. Ser-391, Ser-419, and Ser-425 each carry phosphoserine. A Glycyl lysine isopeptide (Lys-Gly) (interchain with G-Cter in SUMO2) cross-link involves residue Lys-436. Positions 565-569 match the PxVxL motif motif; that stretch reads LRVCL. Ser-584 bears the Phosphoserine mark. A Glycyl lysine isopeptide (Lys-Gly) (interchain with G-Cter in SUMO2) cross-link involves residue Lys-590. Short sequence motifs (nuclear localization signal) lie at residues 612–615 and 625–628; these read KKRK and KKIK. Positions 665 to 698 are disordered; that stretch reads IVTSHSTTREDKRTEAEHCSHEKQEKGTLSSSTS. A compositionally biased stretch (basic and acidic residues) spans 671–690; that stretch reads TTREDKRTEAEHCSHEKQEK. Residues 678-711 are a coiled coil; sequence TEAEHCSHEKQEKGTLSSSTSFEQSTFLNKNFME. Lys-687 is covalently cross-linked (Glycyl lysine isopeptide (Lys-Gly) (interchain with G-Cter in SUMO2)). Thr-717 is modified (phosphothreonine).

This sequence belongs to the LRIF1 family. Interacts with RARA. Interacts with SMCHD1; leading to recruitment to inactivated chromosome X in females. Interacts (via PxVxL motif) with HP1 (CBX1/HP1-beta, CBX3/HP1-gamma and CBX5/HP1-alpha).

It is found in the chromosome. The protein resides in the nucleus matrix. Its function is as follows. Together with SMCHD1, involved in chromosome X inactivation in females by promoting the compaction of heterochromatin. Also able to repress the ligand-induced transcriptional activity of retinoic acid receptor alpha (RARA), possibly through direct recruitment of histone deacetylases. This Mus musculus (Mouse) protein is Ligand-dependent nuclear receptor-interacting factor 1 (Lrif1).